Consider the following 283-residue polypeptide: Non-selective voltage-gated ion channel VDAC3 (283 aa).

Cys-2 is modified (N-acetylcysteine). Thr-4 bears the Phosphothreonine mark. Residues Lys-12, Lys-15, and Lys-20 each carry the N6-acetyllysine modification. Beta stranded transmembrane passes span 26–35 (MVKIDLRTKS) and 39–47 (VEFSTSGHA). Lys-53 is covalently cross-linked (Glycyl lysine isopeptide (Lys-Gly) (interchain with G-Cter in ubiquitin)). A run of 3 beta stranded transmembrane segments spans residues 54-64 (ASGNLETKYKV), 69-76 (LTFTQKWN), and 80-89 (TLGTEISLEN). Lys-90 carries the N6-acetyllysine modification. The beta stranded transmembrane segment at 95–104 (LKLTLDTIFV) threads the bilayer. Residues Lys-109 and Lys-110 each participate in a glycyl lysine isopeptide (Lys-Gly) (interchain with G-Cter in ubiquitin) cross-link. 10 beta stranded membrane-spanning segments follow: residues 111 to 120 (SGKLKASYKR), 123 to 130 (FSLGSNVD), 137 to 145 (TIYGWAVLA), 150 to 158 (LAGYQMSFD), 163 to 175 (KLSQNNFALGYKA), 178 to 185 (FQLHTHVN), 189 to 198 (EFGGSIYQKV), 202 to 211 (IETSINLAWT), 218 to 227 (RFGIAAKYKL), and 231 to 238 (TSLSAKVN). Residue Ser-241 is modified to Phosphoserine. NAD(+)-binding positions include 242-244 (LIG) and 260-264 (SALID). The next 2 membrane-spanning stretches (beta stranded) occupy residues 242–251 (LIGLGYTQTL) and 254–263 (GVKLTLSALI). At Lys-266 the chain carries N6-acetyllysine; alternate. A Glycyl lysine isopeptide (Lys-Gly) (interchain with G-Cter in ubiquitin); alternate cross-link involves residue Lys-266. Residues 273–282 (HKVGLGFELE) traverse the membrane as a beta stranded segment.

Belongs to the eukaryotic mitochondrial porin family. As to quaternary structure, interacts with ARMC12 in a TBC1D21-dependent manner. Interacts with MISFA. In terms of processing, ubiquitinated by PRKN during mitophagy, leading to its degradation and enhancement of mitophagy. Deubiquitinated by USP30.

It is found in the mitochondrion outer membrane. Its subcellular location is the membrane. The catalysed reaction is chloride(in) = chloride(out). The enzyme catalyses K(+)(in) = K(+)(out). Functionally, non-selective voltage-gated ion channel that mediates the transport of anions and cations through the mitochondrion outer membrane and plasma membrane. Forms a high-conducting channel with a stable open state and a voltage-induced closure with a mild preference for anions over cations. Involved in male fertility and sperm mitochondrial sheath formation. This is Non-selective voltage-gated ion channel VDAC3 from Oryctolagus cuniculus (Rabbit).